Here is a 203-residue protein sequence, read N- to C-terminus: SOSS complex subunit B1 (203 aa).

Residues 22–92 constitute a DNA-binding region (OB); it reads IVLETGRVTK…TLYTGRGGDL (71 aa). A disordered region spans residues 111–203; it reads PNPEYIAQQS…GKEPRRTGKR (93 aa). Positions 117–128 are enriched in polar residues; the sequence is AQQSQNKQAQAE. Low complexity predominate over residues 129–140; it reads SGTGTNSHNSSS. Positions 149–182 are enriched in polar residues; that stretch reads ENGNGSNSSGPPTHQSTAPTHSTSGRITRSQPNH.

It belongs to the SOSS-B family. SOSS-B1 subfamily. In terms of assembly, component of the SOSS complex, composed of soss-b (soss-b1/nabp2 or soss-b2/nabp1), soss-a/ints3 and soss-c/inip. SOSS complexes containing soss-b1/nabp2 are more abundant than complexes containing soss-b2/nabp1.

The protein resides in the nucleus. Functionally, component of the SOSS complex, a multiprotein complex that functions downstream of the MRN complex to promote DNA repair and G2/M checkpoint. In the SOSS complex, acts as a sensor of single-stranded DNA that binds to single-stranded DNA. The SOSS complex associates with DNA lesions and influences diverse endpoints in the cellular DNA damage response including cell-cycle checkpoint activation, recombinational repair and maintenance of genomic stability. Required for efficient homologous recombination-dependent repair of double-strand breaks (DSBs). The protein is SOSS complex subunit B1 (nabp2) of Xenopus tropicalis (Western clawed frog).